The sequence spans 244 residues: rRNA adenine N-6-methyltransferase (244 aa).

Residues Asn11, Ile13, Gly38, Glu59, Asp84, and Asn101 each contribute to the S-adenosyl-L-methionine site.

The protein belongs to the class I-like SAM-binding methyltransferase superfamily. rRNA adenine N(6)-methyltransferase family.

The enzyme catalyses adenosine(2085) in 23S rRNA + 2 S-adenosyl-L-methionine = N(6)-dimethyladenosine(2085) in 23S rRNA + 2 S-adenosyl-L-homocysteine + 2 H(+). Its function is as follows. This protein produces a dimethylation of the adenine residue at position 2085 in 23S rRNA, resulting in reduced affinity between ribosomes and macrolide-lincosamide-streptogramin B antibiotics. This Staphylococcus epidermidis protein is rRNA adenine N-6-methyltransferase (ermM).